A 544-amino-acid chain; its full sequence is Putative ankyrin repeat protein L289 (544 aa).

ANK repeat units follow at residues 31–71 (KNFS…AQNE), 72–105 (HGWTALMIASILSNDWSSIKTVKLLLKKGADPNI), 110–143 (YSQTVLKLAASNVKYASNIKTIKLLIHYGADINH), 147–181 (LGVSVLHYCYIDYYTKSDNLEVIKLLLSYGMDINS), 185–218 (QGNTLLYIVSKVSQNNNSTETVKFLLENNADPNI), 222–255 (KGTTALMVASKYSNSTSNLATVKLLLDYEANINF), 259–297 (YNETALSKVVSNFYESNYNKNNFMTLKFLIQKGAIDIPI), 300–339 (DKLSILMVAVIRTYCSENSDNFTKLIELLLKHFNPNIQCS), 340–374 (NGKTVLHYLCNKQVCNFPYVDVINLLLKAGINPNI), 378–413 (QGKTALILACDNYCFLKNKEAVRLLCKVSTINTIDN), and 414–447 (TGQSALDYFLNKYKEKYTNILTIILKYGAYCVNK).

The chain is Putative ankyrin repeat protein L289 from Acanthamoeba polyphaga mimivirus (APMV).